We begin with the raw amino-acid sequence, 389 residues long: Putative RNA methyltransferase R405 (389 aa).

Gln-207, Asp-261, and Asp-314 together coordinate S-adenosyl-L-methionine. Cys-342 serves as the catalytic Nucleophile.

It belongs to the class I-like SAM-binding methyltransferase superfamily. RNA M5U methyltransferase family.

This is Putative RNA methyltransferase R405 from Acanthamoeba polyphaga (Amoeba).